We begin with the raw amino-acid sequence, 381 residues long: Metacaspase-8 (381 aa).

Active-site residues include His86 and Cys140. The residue at position 140 (Cys140) is an S-nitrosocysteine.

It belongs to the peptidase C14B family. Proteolytically processed; by an autocatalytic mechanism.

In terms of biological role, cysteine protease that cleaves specifically after arginine residues. Does not cleave caspase-specific substrates. May be involved in the modulation of programmed cell death activated by oxidative stress. The chain is Metacaspase-8 (AMC8) from Arabidopsis thaliana (Mouse-ear cress).